A 79-amino-acid polypeptide reads, in one-letter code: uncharacterized protein (79 aa).

The first 20 residues, 1–20 (MSQLMGIITRLQSLQETAEA), serve as a signal peptide directing secretion.

This is an uncharacterized protein from Bacillus subtilis (strain 168).